The following is a 219-amino-acid chain: Ribose-5-phosphate isomerase A (219 aa).

Residues 28–31 (TGST), 81–84 (DGAD), and 94–97 (KGGG) contribute to the substrate site. The active-site Proton acceptor is Glu-103. Lys-121 contacts substrate.

Belongs to the ribose 5-phosphate isomerase family. In terms of assembly, homodimer.

It carries out the reaction aldehydo-D-ribose 5-phosphate = D-ribulose 5-phosphate. It functions in the pathway carbohydrate degradation; pentose phosphate pathway; D-ribose 5-phosphate from D-ribulose 5-phosphate (non-oxidative stage): step 1/1. Its function is as follows. Catalyzes the reversible conversion of ribose-5-phosphate to ribulose 5-phosphate. The chain is Ribose-5-phosphate isomerase A from Escherichia fergusonii (strain ATCC 35469 / DSM 13698 / CCUG 18766 / IAM 14443 / JCM 21226 / LMG 7866 / NBRC 102419 / NCTC 12128 / CDC 0568-73).